A 714-amino-acid chain; its full sequence is Transcription activator of gluconeogenesis UREG_00958 (714 aa).

A disordered region spans residues 1–71; the sequence is MTSNARNGPL…NAKDPLRPRR (71 aa). Residues 38–62 show a composition bias toward polar residues; the sequence is ESQTQVENSSTKQPNGQTKPMSASN. The zn(2)-C6 fungal-type DNA-binding region spans 78–106; it reads CFACQRAHLTCGDERPCQRCIKRGIQNSC. Disordered regions lie at residues 176–228, 274–312, and 539–567; these read SLSQ…NASG, GAGDTPPSDSATQHGSVGRNGSGTFAPGSNFGESPTAQP, and NTGGSSGSTSGTSSRGSFTPRAGMEVNPS. Residues 191–228 are compositionally biased toward polar residues; it reads FPSQSPVSPTFSITANSATSGNQNMPSSLPASNGNASG. A compositionally biased stretch (low complexity) spans 545–555; the sequence is GSTSGTSSRGS.

This sequence belongs to the ERT1/acuK family.

Its subcellular location is the nucleus. In terms of biological role, transcription factor which regulates nonfermentable carbon utilization. Activator of gluconeogenetic genes. The protein is Transcription activator of gluconeogenesis UREG_00958 of Uncinocarpus reesii (strain UAMH 1704).